Here is a 587-residue protein sequence, read N- to C-terminus: MKRSMYAGRVREEHIGQEITLKGWVGRRRDLGGLIFIDLRDREGIMQLVINPEKVSAEVMATAESLRSEFVIEVTGQVAAREQANDKLPTGAVELNVTALIVLNTAKTTPFEIKDGIEANDDTRLRYRYLDLRRPEMLENLKLRAKVTHSIRNYLDELEFIDVETPFLSKSTPEGARDYLVPSRVNKGHFYALPQSPQITKQLLMNAGFDRYYQIVKCFRDEDLRGDRQPEFTQVDLETSFLTEQEIQDITEGLIARVMKETKGIEVTLPFPRMKYDDAMALYGSDKPDTRFDMLLQDLTEVVKGVDFKVFSEALAVKAIVVKGAADNYSRKDIDKMTEVAKQYGAKGLAWVKVVDGELNGPVAKFLTGIQEELTTALALEDKDLVLFVADTLEVANATLGALRGRIAKELGLIDNDKFNFLWVVDWPMFEWSEEEGRYMSAHHPFTLPQEETAHELEGDLAKVRAIAYDIVLNGYELGGGSLRINQKDLQERMFKALGFSAEEANDQFGFLLEAMDYGFPPHGGLAIGLDRFVMLLAGEENIREVIAFPKNNKATDPMTQAPSTVALKQLEELSLQVEEDETNKTN.

An L-aspartate-binding site is contributed by E174. The tract at residues 198–201 is aspartate; it reads QITK. Residue R220 coordinates L-aspartate. ATP is bound by residues 220 to 222 and Q229; that span reads RDE. H443 lines the L-aspartate pocket. Residue E477 coordinates ATP. R484 lines the L-aspartate pocket. 529 to 532 serves as a coordination point for ATP; sequence GLDR.

It belongs to the class-II aminoacyl-tRNA synthetase family. Type 1 subfamily. Homodimer.

It is found in the cytoplasm. It catalyses the reaction tRNA(Asp) + L-aspartate + ATP = L-aspartyl-tRNA(Asp) + AMP + diphosphate. In terms of biological role, catalyzes the attachment of L-aspartate to tRNA(Asp) in a two-step reaction: L-aspartate is first activated by ATP to form Asp-AMP and then transferred to the acceptor end of tRNA(Asp). The polypeptide is Aspartate--tRNA ligase (Streptococcus pneumoniae serotype 19F (strain G54)).